Here is a 510-residue protein sequence, read N- to C-terminus: NAD(P)H-quinone oxidoreductase subunit 2 A, chloroplastic (510 aa).

Helical transmembrane passes span L24 to L44, M57 to F77, I99 to I119, M124 to C144, L149 to Y169, Y183 to G203, P227 to A247, W295 to I315, M323 to D343, Y354 to L374, A395 to F415, L418 to L438, and L482 to I502.

The protein belongs to the complex I subunit 2 family. NDH is composed of at least 16 different subunits, 5 of which are encoded in the nucleus.

Its subcellular location is the plastid. The protein resides in the chloroplast thylakoid membrane. It catalyses the reaction a plastoquinone + NADH + (n+1) H(+)(in) = a plastoquinol + NAD(+) + n H(+)(out). The enzyme catalyses a plastoquinone + NADPH + (n+1) H(+)(in) = a plastoquinol + NADP(+) + n H(+)(out). Its function is as follows. NDH shuttles electrons from NAD(P)H:plastoquinone, via FMN and iron-sulfur (Fe-S) centers, to quinones in the photosynthetic chain and possibly in a chloroplast respiratory chain. The immediate electron acceptor for the enzyme in this species is believed to be plastoquinone. Couples the redox reaction to proton translocation, and thus conserves the redox energy in a proton gradient. In Populus trichocarpa (Western balsam poplar), this protein is NAD(P)H-quinone oxidoreductase subunit 2 A, chloroplastic.